A 247-amino-acid chain; its full sequence is MESSSTIDPAEVAKFEAMAAEWWNPHGKFKPLHQMNPCRLDYITQQIAAEFDRDLSAPLPFEGLRLLDIGCGGGLLSEPMARLGAEVIGADAAPRNIPVAKLHAEQSGLTIDYRNTTAEALAAAGERFDVVLNMEVVEHVADPLAYLTACRELLKPGGLMICSTLNRNPKSFAMAIVGAEWVMRWLPKGTHDWSKFITPDELYDLIRKAGLDPVDRKGMVFNPVSWSWSLSTRDLSVNYVTASVRRT.

4 residues coordinate S-adenosyl-L-methionine: Arg-39, Gly-70, Asp-91, and Met-134.

Belongs to the methyltransferase superfamily. UbiG/COQ3 family.

The enzyme catalyses a 3-demethylubiquinol + S-adenosyl-L-methionine = a ubiquinol + S-adenosyl-L-homocysteine + H(+). It carries out the reaction a 3-(all-trans-polyprenyl)benzene-1,2-diol + S-adenosyl-L-methionine = a 2-methoxy-6-(all-trans-polyprenyl)phenol + S-adenosyl-L-homocysteine + H(+). Its pathway is cofactor biosynthesis; ubiquinone biosynthesis. In terms of biological role, O-methyltransferase that catalyzes the 2 O-methylation steps in the ubiquinone biosynthetic pathway. The chain is Ubiquinone biosynthesis O-methyltransferase from Cereibacter sphaeroides (strain ATCC 17029 / ATH 2.4.9) (Rhodobacter sphaeroides).